The chain runs to 365 residues: Endophilin-B1 (365 aa).

Methionine 1 carries the N-acetylmethionine modification. Residues 1–30 are membrane-binding amphipathic helix; the sequence is MNIMDFNVKKLAADAGTFLSRAVQFTEEKL. Positions 1–37 are required for membrane binding; sequence MNIMDFNVKKLAADAGTFLSRAVQFTEEKLGQAEKTE. Residues 27-261 enclose the BAR domain; sequence EEKLGQAEKT…LGSFPSNYHS (235 aa). Residue threonine 145 is modified to Phosphothreonine; by CDK5. A coiled-coil region spans residues 155 to 195; it reads YKTIAKERKLLQNKRLDLDAAKTRLKKAKAAETRASSEQEL. The 61-residue stretch at 305–365 folds into the SH3 domain; that stretch reads GGSRRARVLY…VPITYLELLN (61 aa).

This sequence belongs to the endophilin family. Homodimer, and heterodimer with SH3GLB2. Binds BAX; induction of apoptosis augments BAX binding. Binds DNM1, HTT, AMPH, BIN1 and ARFGAP1. Interacts with UVRAG; UVRAG bridges the interaction to BECN1 indicative for an association with the PI3K complex II (PI3KC3-C2). Post-translationally, phosphorylated at Thr-145 by CDK5; this phosphorylation is required for autophagy induction in starved neurons and facilitates homodimerization.

The protein resides in the cytoplasm. It localises to the golgi apparatus membrane. Its subcellular location is the mitochondrion outer membrane. The protein localises to the cytoplasmic vesicle. It is found in the autophagosome membrane. The protein resides in the midbody. In terms of biological role, may be required for normal outer mitochondrial membrane dynamics. Required for coatomer-mediated retrograde transport in certain cells. May recruit other proteins to membranes with high curvature. May promote membrane fusion. Involved in activation of caspase-dependent apoptosis by promoting BAX/BAK1 activation. Involved in caspase-independent apoptosis during nutrition starvation and involved in the regulation of autophagy. Activates lipid kinase activity of PIK3C3 during autophagy probably by associating with the PI3K complex II (PI3KC3-C2). Associated with PI3KC3-C2 during autophagy may regulate the trafficking of ATG9A from the Golgi complex to the peripheral cytoplasm for the formation of autophagosomes by inducing Golgi membrane tubulation and fragmentation. Involved in regulation of degradative endocytic trafficking and cytokinesis, probably in the context of PI3KC3-C2. This is Endophilin-B1 (SH3GLB1) from Bos taurus (Bovine).